We begin with the raw amino-acid sequence, 397 residues long: MVSSSTIKSLIEKKGKDLPESVKQELYEKLIKYNEKYKLTKVEVETIIDEVIKEYEKALIEPGEAVGTVAAQSIGEPSTQMTLNTFHYAGVAEINVTLGLPRIIEIVDARKNPSTPMMTVYLDEEHRYDREKAEEVARRIEGTTLENLARTTTLDLINMEFIVEVDPERLEKSGLTMEKILKKLQSSFKSAEFEADGYTLIVRPKKIEKISDLRRLSEKVKKHRLKGLSGVGKTIIRKEGDEYVIYTEGSNFKQVLKVPGVDPTRTRTNNIHEIAEVLGIEAARNAIIEEIINTMHEQGLEVDIRHIMLVADIMTLDGVVRPIGRHGVVGEKASVLARAAFEITVQHLFEAAERGEVDNLSGVIENVLIGQPVPVGTGMVKLTMKLPLKPQKEKEEV.

It belongs to the RNA polymerase beta' chain family. In terms of assembly, part of the RNA polymerase complex.

It localises to the cytoplasm. It catalyses the reaction RNA(n) + a ribonucleoside 5'-triphosphate = RNA(n+1) + diphosphate. DNA-dependent RNA polymerase (RNAP) catalyzes the transcription of DNA into RNA using the four ribonucleoside triphosphates as substrates. Forms part of the jaw domain. The polypeptide is DNA-directed RNA polymerase subunit Rpo1C (Pyrococcus horikoshii (strain ATCC 700860 / DSM 12428 / JCM 9974 / NBRC 100139 / OT-3)).